We begin with the raw amino-acid sequence, 463 residues long: Hydroxyacid-oxoacid transhydrogenase, mitochondrial (463 aa).

It belongs to the iron-containing alcohol dehydrogenase family. Hydroxyacid-oxoacid transhydrogenase subfamily.

The protein resides in the mitochondrion. It catalyses the reaction (S)-3-hydroxybutanoate + 2-oxoglutarate = (R)-2-hydroxyglutarate + acetoacetate. The enzyme catalyses 4-hydroxybutanoate + 2-oxoglutarate = (R)-2-hydroxyglutarate + succinate semialdehyde. Functionally, catalyzes the cofactor-independent reversible oxidation of gamma-hydroxybutyrate (GHB) to succinic semialdehyde (SSA) coupled to reduction of 2-ketoglutarate (2-KG) to D-2-hydroxyglutarate (D-2-HG). L-3-hydroxybutyrate (L-3-OHB) is also a substrate for HOT when using 2-KG as hydrogen acceptor, resulting in the formation of D-2-HG. The sequence is that of Hydroxyacid-oxoacid transhydrogenase, mitochondrial (adhfe1) from Xenopus laevis (African clawed frog).